The primary structure comprises 520 residues: Phospholipase C A (520 aa).

A signal peptide (tat-type signal) is located at residues 1–38 (MSASPLLGMSRREFLTKLTGAGAAAFLMDWAAPVIEKA).

It belongs to the bacterial phospholipase C family. Post-translationally, predicted to be exported by the Tat system. The position of the signal peptide cleavage has not been experimentally proven.

Its subcellular location is the secreted. It is found in the cell wall. The catalysed reaction is a 1,2-diacyl-sn-glycero-3-phosphocholine + H2O = phosphocholine + a 1,2-diacyl-sn-glycerol + H(+). Functionally, involved in virulence. Induces cytotoxic effects on mouse macrophage cell lines, via direct or indirect enzymatic hydrolysis of cell membrane phospholipids. Hydrolyzes phosphatidylcholine. This is Phospholipase C A from Mycobacterium tuberculosis (strain CDC 1551 / Oshkosh).